A 435-amino-acid chain; its full sequence is Probable long-chain-alcohol O-fatty-acyltransferase 11 (435 aa).

11 consecutive transmembrane segments (helical) span residues 7 to 27, 36 to 56, 59 to 79, 120 to 140, 149 to 169, 200 to 220, 238 to 258, 263 to 283, 300 to 320, 363 to 383, and 406 to 426; these read NLIK…YVPT, FLSV…FASV, SGYT…LFSF, PIEV…SVVL, IYPI…LEIL, DFWG…DVYA, LGVF…FFYI, PTGE…AYDA, CLIL…WLFF, FFTG…IGFV, and FFIG…IGFV.

Belongs to the wax synthase family.

The protein localises to the membrane. The enzyme catalyses a long chain fatty alcohol + a fatty acyl-CoA = a wax ester + CoA. Functionally, catalyzes the final step in the synthesis of long-chain linear esters (waxes). The protein is Probable long-chain-alcohol O-fatty-acyltransferase 11 of Arabidopsis thaliana (Mouse-ear cress).